Reading from the N-terminus, the 437-residue chain is Xylose isomerase (437 aa).

Catalysis depends on residues histidine 102 and aspartate 105. Mg(2+) contacts are provided by glutamate 233, glutamate 269, histidine 272, aspartate 297, aspartate 308, aspartate 310, and aspartate 340.

Belongs to the xylose isomerase family. As to quaternary structure, homotetramer. Mg(2+) is required as a cofactor.

It is found in the cytoplasm. It carries out the reaction alpha-D-xylose = alpha-D-xylulofuranose. The sequence is that of Xylose isomerase from Novosphingobium aromaticivorans (strain ATCC 700278 / DSM 12444 / CCUG 56034 / CIP 105152 / NBRC 16084 / F199).